Here is a 504-residue protein sequence, read N- to C-terminus: Maturase K (504 aa).

It belongs to the intron maturase 2 family. MatK subfamily.

The protein localises to the plastid. It is found in the chloroplast. Functionally, usually encoded in the trnK tRNA gene intron. Probably assists in splicing its own and other chloroplast group II introns. The polypeptide is Maturase K (Lobularia maritima (Sweet alyssum)).